Here is a 140-residue protein sequence, read N- to C-terminus: Thioredoxin H9 (140 aa).

Residue G2 is the site of N-myristoyl glycine attachment. Residue C4 is the site of S-palmitoyl cysteine attachment. S14 is subject to Phosphoserine. One can recognise a Thioredoxin domain in the interval 25-129 (VHLITTKESW…PELQKKVTSI (105 aa)). Catalysis depends on nucleophile residues C57 and C60. C57 and C60 are oxidised to a cystine. Phosphoserine is present on S136.

The protein belongs to the thioredoxin family. Plant H-type subfamily. Ubiquitous.

It localises to the cell membrane. In terms of biological role, probable thiol-disulfide oxidoreductase that may play a role in intercellular communication due to its ability to move from cell to cell. In Arabidopsis thaliana (Mouse-ear cress), this protein is Thioredoxin H9 (TRX9).